The following is a 453-amino-acid chain: Bifunctional protein GlmU (453 aa).

The segment at 1–225 is pyrophosphorylase; it reads MNIVILAAGT…EWETLGVNSK (225 aa). Residues 6-9, K20, Q71, 76-77, 98-100, G135, E150, N165, and N223 each bind UDP-N-acetyl-alpha-D-glucosamine; these read LAAG, GT, and YGD. D100 provides a ligand contact to Mg(2+). N223 contacts Mg(2+). Positions 226 to 246 are linker; the sequence is AQLAELERIHQRNLADALLAA. The tract at residues 247–453 is N-acetyltransferase; it reads GVTLADPARI…GYVRPVKKKS (207 aa). Positions 329 and 347 each coordinate UDP-N-acetyl-alpha-D-glucosamine. The active-site Proton acceptor is the H359. Y362 and N373 together coordinate UDP-N-acetyl-alpha-D-glucosamine. Residues A376, 382–383, S401, and A419 each bind acetyl-CoA; that span reads NY.

In the N-terminal section; belongs to the N-acetylglucosamine-1-phosphate uridyltransferase family. This sequence in the C-terminal section; belongs to the transferase hexapeptide repeat family. Homotrimer. The cofactor is Mg(2+).

It localises to the cytoplasm. It carries out the reaction alpha-D-glucosamine 1-phosphate + acetyl-CoA = N-acetyl-alpha-D-glucosamine 1-phosphate + CoA + H(+). It catalyses the reaction N-acetyl-alpha-D-glucosamine 1-phosphate + UTP + H(+) = UDP-N-acetyl-alpha-D-glucosamine + diphosphate. It functions in the pathway nucleotide-sugar biosynthesis; UDP-N-acetyl-alpha-D-glucosamine biosynthesis; N-acetyl-alpha-D-glucosamine 1-phosphate from alpha-D-glucosamine 6-phosphate (route II): step 2/2. It participates in nucleotide-sugar biosynthesis; UDP-N-acetyl-alpha-D-glucosamine biosynthesis; UDP-N-acetyl-alpha-D-glucosamine from N-acetyl-alpha-D-glucosamine 1-phosphate: step 1/1. Its pathway is bacterial outer membrane biogenesis; LPS lipid A biosynthesis. Functionally, catalyzes the last two sequential reactions in the de novo biosynthetic pathway for UDP-N-acetylglucosamine (UDP-GlcNAc). The C-terminal domain catalyzes the transfer of acetyl group from acetyl coenzyme A to glucosamine-1-phosphate (GlcN-1-P) to produce N-acetylglucosamine-1-phosphate (GlcNAc-1-P), which is converted into UDP-GlcNAc by the transfer of uridine 5-monophosphate (from uridine 5-triphosphate), a reaction catalyzed by the N-terminal domain. This Burkholderia mallei (strain NCTC 10247) protein is Bifunctional protein GlmU.